Consider the following 168-residue polypeptide: Group IIF secretory phospholipase A2 (168 aa).

Positions 1–20 (MKKFFAIAVLAGSVVTTAHS) are cleaved as a signal peptide. 7 disulfide bridges follow: Cys-46–Cys-138, Cys-48–Cys-64, Cys-63–Cys-120, Cys-69–Cys-145, Cys-70–Cys-113, Cys-79–Cys-106, and Cys-98–Cys-111. 3 residues coordinate Ca(2+): Tyr-47, Gly-49, and Gly-51. Residue His-67 is part of the active site. Asp-68 contributes to the Ca(2+) binding site. N-linked (GlcNAc...) asparagine glycans are attached at residues Asn-92 and Asn-102. Asp-114 is a catalytic residue. Positions 139–168 (QGPTPNCSIYDPYPEEVTCGHGLPATPVST) are required for localization on the plasma membrane. Residue Asn-144 is glycosylated (N-linked (GlcNAc...) asparagine).

Belongs to the phospholipase A2 family. Requires Ca(2+) as cofactor. Strongly expressed in testis.

It is found in the secreted. Its subcellular location is the cell membrane. It carries out the reaction a 1,2-diacyl-sn-glycero-3-phosphocholine + H2O = a 1-acyl-sn-glycero-3-phosphocholine + a fatty acid + H(+). It catalyses the reaction 1-hexadecanoyl-2-(9Z-octadecenoyl)-sn-glycero-3-phospho-(1'-sn-glycerol) + H2O = 1-hexadecanoyl-sn-glycero-3-phospho-(1'-sn-glycerol) + (9Z)-octadecenoate + H(+). The enzyme catalyses 1-hexadecanoyl-2-(9Z,12Z-octadecadienoyl)-sn-glycero-3-phosphoethanolamine + H2O = 1-hexadecanoyl-sn-glycero-3-phosphoethanolamine + (9Z,12Z)-octadecadienoate + H(+). The catalysed reaction is 1-hexadecanoyl-2-(5Z,8Z,11Z,14Z-eicosatetraenoyl)-sn-glycero-3-phosphoethanolamine + H2O = 1-hexadecanoyl-sn-glycero-3-phosphoethanolamine + (5Z,8Z,11Z,14Z)-eicosatetraenoate + H(+). It carries out the reaction 1-hexadecanoyl-2-(9Z-octadecenoyl)-sn-glycero-3-phosphocholine + H2O = 1-hexadecanoyl-sn-glycero-3-phosphocholine + (9Z)-octadecenoate + H(+). It catalyses the reaction 1-hexadecanoyl-2-(9Z-octadecenoyl)-sn-glycero-3-phospho-L-serine + H2O = 1-hexadecanoyl-sn-glycero-3-phospho-L-serine + (9Z)-octadecenoate + H(+). Functionally, secretory calcium-dependent phospholipase A2 that primarily targets extracellular phospholipids. Hydrolyzes the ester bond of the fatty acyl group attached at the sn-2 position of phospholipids (phospholipase A2 activity), the catalytic efficiency decreasing in the following order: phosphatidylglycerols &gt; phosphatidylethanolamines &gt; phosphatidylcholines &gt; phosphatidylserines. May play a role in lipid mediator production in inflammatory conditions, by providing arachidonic acid to downstream cyclooxygenases and lipoxygenases. The protein is Group IIF secretory phospholipase A2 (Pla2g2f) of Mus musculus (Mouse).